The chain runs to 181 residues: MSFVPTKVFFTKGVGRHKEYLSSFELALRDAKIEKCNLVTVSSIFPPKCERISVEEGLKLLSPGQITFAVMARNATNEYNRLISASVGVAIPADDTQYGYLSEHHPYGESDEQCGEYAEDLAATMLATTLGIEFDPNKDWDEREGIYKMSGKIINSYNITQSAEGENGLWTTVISCAVLLP.

Pyruvic acid (Ser) is present on Ser-43.

The protein belongs to the PdaD family. The cofactor is pyruvate.

The enzyme catalyses L-arginine + H(+) = agmatine + CO2. The sequence is that of Probable pyruvoyl-dependent arginine decarboxylase from Chlorobium limicola (strain DSM 245 / NBRC 103803 / 6330).